Reading from the N-terminus, the 415-residue chain is Serine hydroxymethyltransferase (415 aa).

(6S)-5,6,7,8-tetrahydrofolate is bound by residues Leu117 and 121-123 (GHL). Lys226 is modified (N6-(pyridoxal phosphate)lysine). (6S)-5,6,7,8-tetrahydrofolate is bound by residues Glu241 and 349–351 (SPF).

This sequence belongs to the SHMT family. As to quaternary structure, homodimer. Pyridoxal 5'-phosphate serves as cofactor.

It is found in the cytoplasm. It catalyses the reaction (6R)-5,10-methylene-5,6,7,8-tetrahydrofolate + glycine + H2O = (6S)-5,6,7,8-tetrahydrofolate + L-serine. Its pathway is one-carbon metabolism; tetrahydrofolate interconversion. It functions in the pathway amino-acid biosynthesis; glycine biosynthesis; glycine from L-serine: step 1/1. Its function is as follows. Catalyzes the reversible interconversion of serine and glycine with tetrahydrofolate (THF) serving as the one-carbon carrier. This reaction serves as the major source of one-carbon groups required for the biosynthesis of purines, thymidylate, methionine, and other important biomolecules. Also exhibits THF-independent aldolase activity toward beta-hydroxyamino acids, producing glycine and aldehydes, via a retro-aldol mechanism. In Geotalea daltonii (strain DSM 22248 / JCM 15807 / FRC-32) (Geobacter daltonii), this protein is Serine hydroxymethyltransferase.